Here is a 318-residue protein sequence, read N- to C-terminus: MHIKATVERLPGGMMLVPLLLGAVCHTLWPQAGSTLGSFSNGLISGTVPILAVWFFCMGATIQLRASGRVLRRSGSLVLTKIAMAWLVAVLCAPLLPIGGVPSGPLAGLSVLALVAAMDMTNGGLYAALMQQYGSSEDAGAVVLMSLESGPLISMLILGASGLASFDPLLFVGAVLPLLLGFALGNLDAQLRQFFAQATTTLVPFFGFALGNTLDLSTIAHTGASGVLLGVAVIVITGLPLLLADRWIGGGNGTAGVAASSTAGAAVATPALIAGMAPQFAPAAPAATALVASAVIVTSLLVPLLTALYARRGVARSG.

A run of 10 helical transmembrane segments spans residues 10–30 (LPGG…TLWP), 42–62 (GLIS…GATI), 82–102 (IAMA…GGVP), 109–129 (LSVL…YAAL), 139–159 (AGAV…LILG), 163–183 (LASF…LGFA), 194–214 (FFAQ…GNTL), 224–244 (ASGV…LLLA), 257–277 (VAAS…AGMA), and 289–309 (ALVA…TALY).

The protein belongs to the KdgT transporter family.

It is found in the cell inner membrane. The catalysed reaction is 2-dehydro-3-deoxy-D-gluconate(in) + H(+)(in) = 2-dehydro-3-deoxy-D-gluconate(out) + H(+)(out). Its function is as follows. Catalyzes the proton-dependent uptake of 2-keto-3-deoxygluconate (KDG) into the cell. This is 2-keto-3-deoxygluconate permease from Xanthomonas euvesicatoria pv. vesicatoria (strain 85-10) (Xanthomonas campestris pv. vesicatoria).